Here is a 252-residue protein sequence, read N- to C-terminus: Large ribosomal subunit protein uL4 (252 aa).

Belongs to the universal ribosomal protein uL4 family. In terms of assembly, part of the 50S ribosomal subunit.

In terms of biological role, one of the primary rRNA binding proteins, this protein initially binds near the 5'-end of the 23S rRNA. It is important during the early stages of 50S assembly. It makes multiple contacts with different domains of the 23S rRNA in the assembled 50S subunit and ribosome. Its function is as follows. Forms part of the polypeptide exit tunnel. The chain is Large ribosomal subunit protein uL4 from Methanococcus aeolicus (strain ATCC BAA-1280 / DSM 17508 / OCM 812 / Nankai-3).